The following is a 173-amino-acid chain: Superoxide dismutase [Cu-Zn] (173 aa).

An N-terminal signal peptide occupies residues 1–22 (MNKAKTLLFTALAFGLSHQALA). 3 residues coordinate Cu cation: H67, H69, and H92. C74 and C169 are joined by a disulfide. H92, H101, H110, and D113 together coordinate Zn(2+). H147 provides a ligand contact to Cu cation.

The protein belongs to the Cu-Zn superoxide dismutase family. As to quaternary structure, homodimer. Cu cation serves as cofactor. It depends on Zn(2+) as a cofactor.

It localises to the periplasm. The enzyme catalyses 2 superoxide + 2 H(+) = H2O2 + O2. Destroys radicals which are normally produced within the cells and which are toxic to biological systems. This Photobacterium leiognathi protein is Superoxide dismutase [Cu-Zn] (sodC).